A 141-amino-acid polypeptide reads, in one-letter code: MADQTRTHHEMISRDSTQEAHPKARQMVKAATAVTAGGSLLVLSGLTLAGTVIALTVATPLLVIFSPVLVPAVVTVALIITGFLASGGFGIAAITAFSWLYRHMTGSGSDKIENARMKVGSRVQDTKYGQHNIGVQHQQVS.

Residues 1 to 22 (MADQTRTHHEMISRDSTQEAHP) are compositionally biased toward basic and acidic residues. The disordered stretch occupies residues 1 to 24 (MADQTRTHHEMISRDSTQEAHPKA). Residues 1–29 (MADQTRTHHEMISRDSTQEAHPKARQMVK) form a polar region. Residues 30–141 (AATAVTAGGS…NIGVQHQQVS (112 aa)) are hydrophobic. 3 consecutive transmembrane segments (helical) span residues 38–58 (GSLLVLSGLTLAGTVIALTVA), 60–80 (PLLVIFSPVLVPAVVTVALII), and 81–101 (TGFLASGGFGIAAITAFSWLY).

The protein belongs to the oleosin family.

Its subcellular location is the lipid droplet. The protein localises to the membrane. In terms of biological role, may have a structural role to stabilize the lipid body during desiccation of the seed by preventing coalescence of the oil. Probably interacts with both lipid and phospholipid moieties of lipid bodies. May also provide recognition signals for specific lipase anchorage in lipolysis during seedling growth. This Arabidopsis thaliana (Mouse-ear cress) protein is Oleosin 14.9 kDa (OL3).